The following is a 328-amino-acid chain: Alanine racemase (328 aa).

The active-site Proton acceptor; specific for D-alanine is lysine 33. Lysine 33 is modified (N6-(pyridoxal phosphate)lysine). Arginine 118 contacts substrate. Tyrosine 237 (proton acceptor; specific for L-alanine) is an active-site residue. Residue methionine 283 coordinates substrate.

It belongs to the alanine racemase family. Pyridoxal 5'-phosphate serves as cofactor.

It catalyses the reaction L-alanine = D-alanine. Its pathway is amino-acid biosynthesis; D-alanine biosynthesis; D-alanine from L-alanine: step 1/1. Functionally, catalyzes the interconversion of L-alanine and D-alanine. May also act on other amino acids. This is Alanine racemase (alr) from Campylobacter jejuni subsp. jejuni serotype O:2 (strain ATCC 700819 / NCTC 11168).